The primary structure comprises 287 residues: Large ribosomal subunit protein uL2 (287 aa).

The disordered stretch occupies residues 221–287; it reads RGSVMNPCDH…SKRSRGGRDS (67 aa). A compositionally biased stretch (basic residues) spans 258 to 287; the sequence is KTRKRNKPSNKFVLRKRRKTSKRSRGGRDS.

The protein belongs to the universal ribosomal protein uL2 family. In terms of assembly, part of the 50S ribosomal subunit. Forms a bridge to the 30S subunit in the 70S ribosome.

In terms of biological role, one of the primary rRNA binding proteins. Required for association of the 30S and 50S subunits to form the 70S ribosome, for tRNA binding and peptide bond formation. It has been suggested to have peptidyltransferase activity; this is somewhat controversial. Makes several contacts with the 16S rRNA in the 70S ribosome. The polypeptide is Large ribosomal subunit protein uL2 (Synechococcus sp. (strain CC9311)).